The primary structure comprises 479 residues: Aspartyl/glutamyl-tRNA(Asn/Gln) amidotransferase subunit B (479 aa).

It belongs to the GatB/GatE family. GatB subfamily. Heterotrimer of A, B and C subunits.

The enzyme catalyses L-glutamyl-tRNA(Gln) + L-glutamine + ATP + H2O = L-glutaminyl-tRNA(Gln) + L-glutamate + ADP + phosphate + H(+). The catalysed reaction is L-aspartyl-tRNA(Asn) + L-glutamine + ATP + H2O = L-asparaginyl-tRNA(Asn) + L-glutamate + ADP + phosphate + 2 H(+). Its function is as follows. Allows the formation of correctly charged Asn-tRNA(Asn) or Gln-tRNA(Gln) through the transamidation of misacylated Asp-tRNA(Asn) or Glu-tRNA(Gln) in organisms which lack either or both of asparaginyl-tRNA or glutaminyl-tRNA synthetases. The reaction takes place in the presence of glutamine and ATP through an activated phospho-Asp-tRNA(Asn) or phospho-Glu-tRNA(Gln). This Myxococcus xanthus (strain DK1622) protein is Aspartyl/glutamyl-tRNA(Asn/Gln) amidotransferase subunit B.